The following is a 623-amino-acid chain: DNA mismatch repair protein MutL (623 aa).

Residues 353–368 show a composition bias toward polar residues; it reads AQQSAPRPANSYSPAS. The tract at residues 353-389 is disordered; it reads AQQSAPRPANSYSPASWRTAPPAPRSEWSPQTAHPAH.

It belongs to the DNA mismatch repair MutL/HexB family.

Functionally, this protein is involved in the repair of mismatches in DNA. It is required for dam-dependent methyl-directed DNA mismatch repair. May act as a 'molecular matchmaker', a protein that promotes the formation of a stable complex between two or more DNA-binding proteins in an ATP-dependent manner without itself being part of a final effector complex. This chain is DNA mismatch repair protein MutL, found in Brucella melitensis biotype 1 (strain ATCC 23456 / CCUG 17765 / NCTC 10094 / 16M).